We begin with the raw amino-acid sequence, 271 residues long: 2-amino-3,7-dideoxy-D-threo-hept-6-ulosonate synthase (271 aa).

The active-site Proton acceptor is aspartate 33. Residues 33–37 (DHGVS) and 153–155 (YPR) each bind 1-deoxy-D-threo-hexo-2,5-diulose 6-phosphate. Tyrosine 153 acts as the Proton donor in catalysis. Lysine 184 (schiff-base intermediate with substrate) is an active-site residue. Residues 209-210 (GG) and 236-237 (GR) contribute to the 1-deoxy-D-threo-hexo-2,5-diulose 6-phosphate site.

Belongs to the DeoC/FbaB aldolase family. ADHS subfamily. As to quaternary structure, homodecamer.

It catalyses the reaction 1-deoxy-D-threo-hexo-2,5-diulose 6-phosphate + L-aspartate 4-semialdehyde = 2,3-dioxopropyl phosphate + 2-amino-2,3,7-trideoxy-D-lyxo-hept-6-ulosonate. In terms of biological role, catalyzes a transaldol reaction between 6-deoxy-5-ketofructose 1-phosphate (DKFP) and L-aspartate semialdehyde (ASA) with an elimination of hydroxypyruvaldehyde phosphate to yield 2-amino-3,7-dideoxy-D-threo-hept-6-ulosonate (ADH). Plays a key role in an alternative pathway of the biosynthesis of 3-dehydroquinate (DHQ), which is involved in the canonical pathway for the biosynthesis of aromatic amino acids. In Methanococcus aeolicus (strain ATCC BAA-1280 / DSM 17508 / OCM 812 / Nankai-3), this protein is 2-amino-3,7-dideoxy-D-threo-hept-6-ulosonate synthase.